Reading from the N-terminus, the 109-residue chain is Putative double-stranded DNA mimic protein YciU (109 aa).

This sequence belongs to the putative dsDNA mimic protein family.

Its function is as follows. May act as a double-stranded DNA (dsDNA) mimic. Probably regulates the activity of a dsDNA-binding protein. The polypeptide is Putative double-stranded DNA mimic protein YciU (Escherichia coli O45:K1 (strain S88 / ExPEC)).